The chain runs to 117 residues: Large ribosomal subunit protein uL18 (117 aa).

It belongs to the universal ribosomal protein uL18 family. Part of the 50S ribosomal subunit; part of the 5S rRNA/L5/L18/L25 subcomplex. Contacts the 5S and 23S rRNAs.

In terms of biological role, this is one of the proteins that bind and probably mediate the attachment of the 5S RNA into the large ribosomal subunit, where it forms part of the central protuberance. This is Large ribosomal subunit protein uL18 from Aster yellows witches'-broom phytoplasma (strain AYWB).